We begin with the raw amino-acid sequence, 343 residues long: Adenine deaminase (343 aa).

3 residues coordinate Zn(2+): His-17, His-19, and His-197. The active-site Proton donor is Glu-200. Asp-278 contacts Zn(2+). Asp-279 contacts substrate.

The protein belongs to the metallo-dependent hydrolases superfamily. Adenosine and AMP deaminases family. Adenine deaminase type 2 subfamily. Zn(2+) is required as a cofactor.

The enzyme catalyses adenine + H2O + H(+) = hypoxanthine + NH4(+). Catalyzes the hydrolytic deamination of adenine to hypoxanthine. Plays an important role in the purine salvage pathway and in nitrogen catabolism. This Rhodopseudomonas palustris (strain BisB18) protein is Adenine deaminase.